Consider the following 326-residue polypeptide: Hairy/enhancer-of-split related with YRPW motif-like protein (326 aa).

Positions 1 to 56 (MKRPRAPSGSDGESDGPIDVGQENDLSQMARPLTTPSPSQMQARKKRRGIIEKRRR) are disordered. The tract at residues 42-111 (QARKKRRGII…GGTGFFDARA (70 aa)) is transcriptional repression and interaction with NCOR1 and SIN3A. One can recognise a bHLH domain in the interval 43–98 (ARKKRRGIIEKRRRDRINSSLSELRRLVPTAFEKQGSSKLEKAEVLQMTVDHLKML). The Orange domain maps to 116–153 (FRSIGFRECLTEVIRYLGVLEGPSSHADPVRIRLLSHL). Disordered stretches follow at residues 223-260 (HRPA…PPPT) and 272-306 (PIPP…PTGR). Positions 292–305 (SGSISSPCPSGPTG) are enriched in low complexity.

It belongs to the HEY family. In terms of assembly, interacts with HES1, HDAC1, NCOR1 and SIN3A. Self-associates. Interacts with GATA4, GATA6, HEY1 and HEY2. In terms of tissue distribution, expressed in heart and at lower levels in brain, lung, muscle, ovary and testis.

The protein resides in the nucleus. Its function is as follows. Transcriptional repressor which binds preferentially to the canonical E box sequence 5'-CACGTG-3'. Downstream effector of Notch signaling required for cardiovascular development. Specifically required for the Notch-induced endocardial epithelial to mesenchymal transition, which is itself criticial for cardiac valve and septum development. Represses transcription by the cardiac transcriptional activators GATA4 and GATA6. This Mus musculus (Mouse) protein is Hairy/enhancer-of-split related with YRPW motif-like protein (Heyl).